The following is a 40-amino-acid chain: MNIILMGLPGAGKGTQASEIVKKFPIPHISTGDMFIKAIK.

10 to 15 provides a ligand contact to ATP; it reads GAGKGT. Residues 30–40 form an NMP region; it reads STGDMFIKAIK. Threonine 31 serves as a coordination point for AMP.

This sequence belongs to the adenylate kinase family. As to quaternary structure, monomer.

It is found in the cytoplasm. The catalysed reaction is AMP + ATP = 2 ADP. Its pathway is purine metabolism; AMP biosynthesis via salvage pathway; AMP from ADP: step 1/1. Functionally, catalyzes the reversible transfer of the terminal phosphate group between ATP and AMP. Plays an important role in cellular energy homeostasis and in adenine nucleotide metabolism. This chain is Adenylate kinase (adk), found in Staphylococcus carnosus.